Here is a 337-residue protein sequence, read N- to C-terminus: Anthranilate phosphoribosyltransferase (337 aa).

Residues Gly-82, 85-86 (GD), Thr-90, 92-95 (NIST), 110-118 (KHGNRAMSS), and Thr-122 each bind 5-phospho-alpha-D-ribose 1-diphosphate. Gly-82 contributes to the anthranilate binding site. Ser-94 is a Mg(2+) binding site. Residue Asn-113 participates in anthranilate binding. Residue Arg-168 participates in anthranilate binding. Positions 226 and 227 each coordinate Mg(2+).

This sequence belongs to the anthranilate phosphoribosyltransferase family. Homodimer. Mg(2+) is required as a cofactor.

It carries out the reaction N-(5-phospho-beta-D-ribosyl)anthranilate + diphosphate = 5-phospho-alpha-D-ribose 1-diphosphate + anthranilate. The protein operates within amino-acid biosynthesis; L-tryptophan biosynthesis; L-tryptophan from chorismate: step 2/5. Catalyzes the transfer of the phosphoribosyl group of 5-phosphorylribose-1-pyrophosphate (PRPP) to anthranilate to yield N-(5'-phosphoribosyl)-anthranilate (PRA). In Phenylobacterium zucineum (strain HLK1), this protein is Anthranilate phosphoribosyltransferase.